We begin with the raw amino-acid sequence, 376 residues long: Penicillin V acylase (376 aa).

Positions 1 to 29 (MIKNNKRIKSTVCALSLVALTLGSAVSLA) are cleaved as a signal peptide. The Nucleophile role is filled by cysteine 30.

The protein belongs to the peptidase C59 family. As to quaternary structure, homotetramer. Dimer of dimers.

It localises to the periplasm. It carries out the reaction a penicillin + H2O = 6-aminopenicillanate + a carboxylate. Exhibits uncharacteristic kinetic behavior, showing positive cooperativity coupled with substrate inhibition. Penicillin acylase activity is enhanced in the presence of the reducing agent DTT, indicating active sulfhydryl group in the enzyme. Also shows enhanced activity in presence of organic solvents and detergents. Inhibited largely in presence of Ag(+), Hg(2+) and Cd(2+) ions, which have strong affinities for sulfhydryl groups. Activity is also inhibited by bile salts. Its function is as follows. Catalyzes the hydrolysis of penicillin V to 6-aminopenicillanate (6-APA). Shows high specificity towards penicillin V. Can use other beta-lactam substrates, including penicillin G, ampicillin, cephalexin, cloxacillin and dicloxacillin, but at a rate less than 10% of that of penicillin V. Does not show any activity with glyco- or tauro-conjugated bile salts. The chain is Penicillin V acylase from Pectobacterium atrosepticum (strain SCRI 1043 / ATCC BAA-672) (Erwinia carotovora subsp. atroseptica).